We begin with the raw amino-acid sequence, 396 residues long: Ribosomal RNA large subunit methyltransferase I (396 aa).

The PUA domain occupies 2-81 (SVRLVLAKGR…ESIDIAFFTR (80 aa)).

The protein belongs to the methyltransferase superfamily. RlmI family.

It localises to the cytoplasm. The enzyme catalyses cytidine(1962) in 23S rRNA + S-adenosyl-L-methionine = 5-methylcytidine(1962) in 23S rRNA + S-adenosyl-L-homocysteine + H(+). Its function is as follows. Specifically methylates the cytosine at position 1962 (m5C1962) of 23S rRNA. This chain is Ribosomal RNA large subunit methyltransferase I, found in Escherichia coli O1:K1 / APEC.